We begin with the raw amino-acid sequence, 513 residues long: ATP synthase subunit alpha (513 aa).

Residue Gly-169–Thr-176 participates in ATP binding.

Belongs to the ATPase alpha/beta chains family. In terms of assembly, F-type ATPases have 2 components, CF(1) - the catalytic core - and CF(0) - the membrane proton channel. CF(1) has five subunits: alpha(3), beta(3), gamma(1), delta(1), epsilon(1). CF(0) has three main subunits: a(1), b(2) and c(9-12). The alpha and beta chains form an alternating ring which encloses part of the gamma chain. CF(1) is attached to CF(0) by a central stalk formed by the gamma and epsilon chains, while a peripheral stalk is formed by the delta and b chains.

It is found in the cell inner membrane. It catalyses the reaction ATP + H2O + 4 H(+)(in) = ADP + phosphate + 5 H(+)(out). Its function is as follows. Produces ATP from ADP in the presence of a proton gradient across the membrane. The alpha chain is a regulatory subunit. The chain is ATP synthase subunit alpha from Alteromonas mediterranea (strain DSM 17117 / CIP 110805 / LMG 28347 / Deep ecotype).